The sequence spans 436 residues: GTPase Der (436 aa).

EngA-type G domains follow at residues 4 to 167 (PIVA…NKES) and 176 to 351 (IRLS…ENHK). GTP-binding positions include 10 to 17 (GKPNVGKS), 57 to 61 (DTGGI), 119 to 122 (NKVD), 182 to 189 (GRPNVGKS), 229 to 233 (DTAGM), and 294 to 297 (NKWD). One can recognise a KH-like domain in the interval 352 to 436 (KRVQSSTLNE…PIHIIPRKRN (85 aa)).

This sequence belongs to the TRAFAC class TrmE-Era-EngA-EngB-Septin-like GTPase superfamily. EngA (Der) GTPase family. Associates with the 50S ribosomal subunit.

In terms of biological role, GTPase that plays an essential role in the late steps of ribosome biogenesis. The protein is GTPase Der of Staphylococcus epidermidis (strain ATCC 35984 / DSM 28319 / BCRC 17069 / CCUG 31568 / BM 3577 / RP62A).